Consider the following 504-residue polypeptide: Probable chlorophyll(ide) b reductase NYC1, chloroplastic (504 aa).

Residues 1–33 (MAAAAVVHLSVHGRLRRSPELHARPYHRPSLLR) constitute a chloroplast transit peptide. The segment at 41-63 (ADNGGEEASSSPPPPTTAEARRR) is disordered. The next 2 membrane-spanning stretches (helical) occupy residues 114–134 (YVIT…LSGG) and 141–161 (LIWY…ANSV). An NAD(+)-binding site is contributed by 175–199 (ITGSTRGLGKALAREFLLSGDRVVI). The active-site Proton acceptor is Y339. A helical membrane pass occupies residues 479–499 (WVSVFSLSVVCAFIILSSSGG).

This sequence belongs to the short-chain dehydrogenases/reductases (SDR) family. As to quaternary structure, interacts with NOL to form a complex that acts as a chlorophyll b reductase. Expressed in leaves and stems. Also detected in non-photosynthetic tissues such as roots.

It localises to the plastid. The protein localises to the chloroplast thylakoid membrane. It catalyses the reaction 7(1)-hydroxychlorophyllide a + NAD(+) = chlorophyllide b + NADH + H(+). The catalysed reaction is 7(1)-hydroxychlorophyllide a + NADP(+) = chlorophyllide b + NADPH + H(+). In terms of biological role, required for proper chloroplast degradation. Involved in chlorophyll b degradation. This is Probable chlorophyll(ide) b reductase NYC1, chloroplastic (NYC1) from Oryza sativa subsp. japonica (Rice).